The chain runs to 366 residues: S-adenosylmethionine:tRNA ribosyltransferase-isomerase (366 aa).

The protein belongs to the QueA family. As to quaternary structure, monomer.

Its subcellular location is the cytoplasm. The enzyme catalyses 7-aminomethyl-7-carbaguanosine(34) in tRNA + S-adenosyl-L-methionine = epoxyqueuosine(34) in tRNA + adenine + L-methionine + 2 H(+). It participates in tRNA modification; tRNA-queuosine biosynthesis. In terms of biological role, transfers and isomerizes the ribose moiety from AdoMet to the 7-aminomethyl group of 7-deazaguanine (preQ1-tRNA) to give epoxyqueuosine (oQ-tRNA). This Bradyrhizobium diazoefficiens (strain JCM 10833 / BCRC 13528 / IAM 13628 / NBRC 14792 / USDA 110) protein is S-adenosylmethionine:tRNA ribosyltransferase-isomerase.